The chain runs to 88 residues: uncharacterized protein (88 aa).

The N-terminal stretch at 1–22 (MGLTLKEHAEVCMALAESSASA) is a signal peptide.

This is an uncharacterized protein from Haemophilus influenzae (strain ATCC 51907 / DSM 11121 / KW20 / Rd).